The following is a 431-amino-acid chain: Trigger factor (431 aa).

The PPIase FKBP-type domain maps to 160 to 245; that stretch reads DDRVTIDFVG…VKKVEVMVLP (86 aa).

This sequence belongs to the FKBP-type PPIase family. Tig subfamily.

It localises to the cytoplasm. It carries out the reaction [protein]-peptidylproline (omega=180) = [protein]-peptidylproline (omega=0). Its function is as follows. Involved in protein export. Acts as a chaperone by maintaining the newly synthesized protein in an open conformation. Functions as a peptidyl-prolyl cis-trans isomerase. The protein is Trigger factor of Mannheimia succiniciproducens (strain KCTC 0769BP / MBEL55E).